The sequence spans 362 residues: MQYRPALSKMKPYVPGEQPPPGKFIKLNTNENPYPPPAPVVSAIQSAATGPLNRYPDPMATSFRRAAANALGLPGPEWVLAGNGSDEILTLLVRGFVGEGESLRLPYPSYILYRTLADIQGANWEQVPFNDPWELPQSFGENREDLKLVLLPNPNSPSGTIVSKPQIAELSNSLNCPLVVDEAYADFAEENCLDLVQSDENIFVTRTLSKSYGLAGIRFGFLVAQPHVIAELTKIKDSYNCDAISIAAATAAMGCQEWLADVVAKMNVTRDRTTDRLRALGFDVTPSHANFVWCRHPEGKHAEIHQYLKQSQILIRYMDFPDWGDGLRISVGTDDQIDACMLMIERAMQSLNISLPARADST.

Position 210 is an N6-(pyridoxal phosphate)lysine (lysine 210).

The protein belongs to the class-II pyridoxal-phosphate-dependent aminotransferase family. Histidinol-phosphate aminotransferase subfamily. Homodimer. The cofactor is pyridoxal 5'-phosphate.

The enzyme catalyses L-histidinol phosphate + 2-oxoglutarate = 3-(imidazol-4-yl)-2-oxopropyl phosphate + L-glutamate. It functions in the pathway amino-acid biosynthesis; L-histidine biosynthesis; L-histidine from 5-phospho-alpha-D-ribose 1-diphosphate: step 7/9. This chain is Histidinol-phosphate aminotransferase, found in Rhodopirellula baltica (strain DSM 10527 / NCIMB 13988 / SH1).